The chain runs to 431 residues: Extensin-3 (431 aa).

The N-terminal stretch at 1 to 27 (MGSPMASLVATLLVLTISLTFVSQSTA) is a signal peptide. Tandem repeats lie at residues 33–41 (SPPPPVKHY), 49–55 (SPPPVYH), and 56–63 (SPPPPKKH). The 13 X 9 AA repeats of S-P-P-P-P-V-K-H-Y stretch occupies residues 33–384 (SPPPPVKHYT…KSPPPPVKHY (352 aa)). The segment at 42-408 (TPPVKHYSPP…KYVYKSPPPP (367 aa)) is disordered. Residues 49 to 59 (SPPPVYHSPPP) show a composition bias toward pro residues. A 13 X 7 AA repeats of S-P-P-P-V-Y-H region spans residues 49 to 391 (SPPPVYHSPP…KHYSPPPVYH (343 aa)). The interval 56–371 (SPPPPKKHYE…YHSPPPPKKH (316 aa)) is 12 X 8 AA repeats of S-P-P-P-P-K-K-H. The tract at residues 64 to 67 (YEYK) is isodityrosine cross-linking. 3 consecutive repeat copies span residues 68 to 76 (SPPPPVKHY), 77 to 83 (SPPPVYH), and 84 to 91 (SPPPPKKH). Residues 68–87 (SPPPPVKHYSPPPVYHSPPP) are compositionally biased toward pro residues. The tract at residues 92–95 (YVYK) is isodityrosine cross-linking. Repeat copies occupy residues 96-104 (SPPPPVKHY), 105-111 (SPPPVYH), and 112-119 (SPPPPKKH). The segment covering 96–115 (SPPPPVKHYSPPPVYHSPPP) has biased composition (pro residues). The isodityrosine cross-linking stretch occupies residues 120–123 (YVYK). Tandem repeats lie at residues 124-132 (SPPPPVKHY), 133-139 (SPPPVYH), and 140-147 (SPPPPKKH). Positions 124–143 (SPPPPVKHYSPPPVYHSPPP) are enriched in pro residues. Residues 148–151 (YVYK) are isodityrosine cross-linking. A run of 3 repeats spans residues 152 to 160 (SPPPPVKHY), 161 to 167 (SPPPVYH), and 168 to 175 (SPPPPKKH). The segment covering 152–171 (SPPPPVKHYSPPPVYHSPPP) has biased composition (pro residues). The interval 176 to 179 (YVYK) is isodityrosine cross-linking. Tandem repeats lie at residues 180–188 (SPPPPVKHY), 189–195 (SPPPVYH), and 196–203 (SPPPPKKH). The span at 180 to 199 (SPPPPVKHYSPPPVYHSPPP) shows a compositional bias: pro residues. The interval 204–207 (YVYK) is isodityrosine cross-linking. Repeat copies occupy residues 208–216 (SPPPPVKHY), 217–223 (SPPPVYH), and 224–231 (SPPPPKKH). Residues 208–227 (SPPPPVKHYSPPPVYHSPPP) show a composition bias toward pro residues. An isodityrosine cross-linking region spans residues 232–235 (YVYK). 3 tandem repeats follow at residues 236–244 (SPPPPVKHY), 245–251 (SPPPVYH), and 252–259 (SPPPPKKH). Positions 236 to 255 (SPPPPVKHYSPPPVYHSPPP) are enriched in pro residues. The segment at 260-263 (YVYK) is isodityrosine cross-linking. 3 repeat units span residues 264 to 272 (SPPPPVKHY), 273 to 279 (SPPPVYH), and 280 to 287 (SPPPPKKH). A compositionally biased stretch (pro residues) spans 264–283 (SPPPPVKHYSPPPVYHSPPP). The interval 288 to 291 (YVYK) is isodityrosine cross-linking. Tandem repeats lie at residues 292–300 (SPPPPVKHY), 301–307 (SPPPVYH), and 308–315 (SPPPPKKH). Pro residues predominate over residues 292–311 (SPPPPVKHYSPPPVYHSPPP). The tract at residues 316–319 (YVYK) is isodityrosine cross-linking. Tandem repeats lie at residues 320–328 (SPPPPVKHY), 329–335 (SPPPVYH), and 336–343 (SPPPPKKH). Pro residues predominate over residues 320-339 (SPPPPVKHYSPPPVYHSPPP). The isodityrosine cross-linking stretch occupies residues 344–347 (YVYK). 3 tandem repeats follow at residues 348 to 356 (SPPPPVKHY), 357 to 363 (SPPPVYH), and 364 to 371 (SPPPPKKH). Residues 348-367 (SPPPPVKHYSPPPVYHSPPP) show a composition bias toward pro residues. The segment at 372–375 (YVYK) is isodityrosine cross-linking. A run of 2 repeats spans residues 376–384 (SPPPPVKHY) and 385–391 (SPPPVYH). Residues 376-395 (SPPPPVKHYSPPPVYHSPPP) show a composition bias toward pro residues. Isodityrosine cross-linking stretches follow at residues 400–403 (YVYK) and 420–423 (YLYK).

The protein belongs to the extensin family. The proline residues of the Ser-Pro(3) repeats are hydroxylated and then O-glycosylated (arabinosylation) by HPAT1, HPAT2 and HPAT3. Around 20% of Hyp units are in the nonglycosylated form. The Ser residues are O-galactosylated. The lack of Ser-O-galactosylation does not affect Hyp-O-arabinosylation, but both types of O-glycosylation are central for the functionality of the protein. Correct Hyp-O-arabinosylation appears to be responsible for generating a bend on the EXT3 backbone around a YVY motif, which may represent a better scenario for Tyr intramolecular cross-links (isodityrosine type). In terms of processing, synthetised as soluble proteins which become insolubilised in the cell wall through the intermolecular cross-linking of Tyr on adjacent monomers. Isodityrosine (IDT) stabilizes and makes rigid the part of the polypeptide where IDT functional sites are present. Predominantly expressed in the roots.

It localises to the secreted. It is found in the primary cell wall. Its function is as follows. Structural component which strengthens the primary cell wall. Forms dendritic structures indicating a propensity for self-assembly through tyrosine cross-linking. Forms intermolecular cross-links exclusively by pulcherosine (three Tyr). Scaffold formation requires an unobstructed C-terminus of EXT3. Required for the correct positioning of the cell plate during cytokinesis in cells of the developing embryo. Extensins contain a characteristic repeat of the pentapeptide Ser-Pro(4). For this particular extensin, a typical repeat of Ser-Pro(3) is found. In Arabidopsis thaliana (Mouse-ear cress), this protein is Extensin-3.